A 126-amino-acid polypeptide reads, in one-letter code: Methylglyoxal synthase (126 aa).

The MGS-like domain maps to 1–126; it reads MAGSKCLALI…AIKLLPTLEA (126 aa). Substrate contacts are provided by residues H12, K16, 38-41, and 59-60; these read TGTT and SG. D65 acts as the Proton donor/acceptor in catalysis. H92 provides a ligand contact to substrate.

The protein belongs to the methylglyoxal synthase family.

The catalysed reaction is dihydroxyacetone phosphate = methylglyoxal + phosphate. Its function is as follows. Catalyzes the formation of methylglyoxal from dihydroxyacetone phosphate. The sequence is that of Methylglyoxal synthase from Rhizobium etli (strain ATCC 51251 / DSM 11541 / JCM 21823 / NBRC 15573 / CFN 42).